We begin with the raw amino-acid sequence, 419 residues long: L-rhamnose isomerase (419 aa).

Mn(2+)-binding residues include His262, Asp294, and Asp296.

This sequence belongs to the rhamnose isomerase family. As to quaternary structure, homotetramer. Requires Mn(2+) as cofactor.

The protein resides in the cytoplasm. The enzyme catalyses L-rhamnopyranose = L-rhamnulose. It participates in carbohydrate degradation; L-rhamnose degradation; glycerone phosphate from L-rhamnose: step 1/3. Catalyzes the interconversion of L-rhamnose and L-rhamnulose. The sequence is that of L-rhamnose isomerase from Klebsiella pneumoniae (strain 342).